The primary structure comprises 156 residues: UPF0336 protein SACE_6876 (156 aa).

The 121-residue stretch at Ile-8–Thr-128 folds into the MaoC-like domain.

Belongs to the UPF0336 family.

This Saccharopolyspora erythraea (strain ATCC 11635 / DSM 40517 / JCM 4748 / NBRC 13426 / NCIMB 8594 / NRRL 2338) protein is UPF0336 protein SACE_6876.